A 640-amino-acid polypeptide reads, in one-letter code: Protein cereblon (640 aa).

A compositionally biased stretch (acidic residues) spans 1-11 (MDDEETAEIDE). Disordered regions lie at residues 1 to 25 (MDDEETAEIDETNSAAADMQVELGP) and 92 to 159 (REDP…EAVP). Over residues 113 to 137 (QPAQQEEQASLPYDSPSRASISSRH) the composition is skewed to low complexity. The Lon N-terminal domain maps to 278–506 (RMLIFMHQHI…IIDTTLKQES (229 aa)). Positions 505–614 (ESLFYCRYCN…LAGSSVRIGK (110 aa)) constitute a CULT domain. 4 residues coordinate Zn(2+): Cys510, Cys513, Cys579, and Cys582.

The protein belongs to the CRBN family. In terms of assembly, likely a component of a DCX (DDB1-CUL4-X-box) protein ligase complex. May interact with pic/DDB1. In terms of processing, ubiquitinated.

It is found in the nucleus. The protein operates within protein modification; protein ubiquitination. In terms of biological role, substrate recognition component of a DCX (DDB1-CUL4-X-box) E3 protein ligase complex that mediates the ubiquitination and subsequent proteasomal degradation of target proteins. Has an essential role in mediating growth by negatively regulating insulin signaling. It also has a role in maintaining presynaptic function in the neuromuscular junction synapses of third-instar larvae. The protein is Protein cereblon of Drosophila virilis (Fruit fly).